A 438-amino-acid chain; its full sequence is Carboxypeptidase A6 (438 aa).

The signal sequence occupies residues 1–30 (MNFLGNPRSHTAAFLPVCWLLLNILKPGHC). Residues 31 to 129 (HSYDNRYAGD…NSLQTQRNRR (99 aa)) constitute a propeptide, activation peptide. N-linked (GlcNAc...) asparagine glycans are attached at residues asparagine 89 and asparagine 153. In terms of domain architecture, Peptidase M14 spans 138 to 433 (VYHSLEDIQS…LAVKNITMHL (296 aa)). Zn(2+) is bound by residues histidine 197 and glutamate 200. Substrate contacts are provided by residues 197–200 (HARE), arginine 255, and 272–273 (NR). An intrachain disulfide couples cysteine 266 to cysteine 289. Histidine 325 contributes to the Zn(2+) binding site. Residue 326-327 (AY) coordinates substrate. Residue asparagine 344 is glycosylated (N-linked (GlcNAc...) asparagine). Tyrosine 377 is a binding site for substrate. Glutamate 399 (proton donor/acceptor) is an active-site residue. Asparagine 428 is a glycosylation site (N-linked (GlcNAc...) asparagine).

Belongs to the peptidase M14 family. The cofactor is Zn(2+). In terms of tissue distribution, in brain, highly expressed in the olfactory bulb with lower levels in other regions including cerebral cortex, hippocampus, hypothalamus, striatum and medulla. Within the olfactory bulb, highest levels occur in the mitral and granular layers with lower levels in the internal and external plexiform layers. Moderate levels are found in the epididymis with low levels in colon and spleen. Not detected in adrenal, liver, lung, ovary or testis. At embryonic day 14.5, enriched in eye, ear, osteoblasts, stomach, skin, dorsal root ganglia and throughout the CNS.

Its subcellular location is the secreted. It localises to the extracellular space. The protein localises to the extracellular matrix. Functionally, may be involved in the proteolytic inactivation of enkephalins and neurotensin in some brain areas. May convert inactive angiotensin I into the biologically active angiotensin II. Releases a C-terminal amino acid, with preference for large hydrophobic C-terminal amino acids and shows only very weak activity toward small amino acids and histidine. This is Carboxypeptidase A6 (Cpa6) from Mus musculus (Mouse).